A 20-amino-acid chain; its full sequence is Allergen Asp fl 2 (20 aa).

The sequence is that of Allergen Asp fl 2 from Aspergillus flavus.